A 140-amino-acid chain; its full sequence is Holo-[acyl-carrier-protein] synthase (140 aa).

Residues D9 and E63 each coordinate Mg(2+).

The protein belongs to the P-Pant transferase superfamily. AcpS family. Requires Mg(2+) as cofactor.

It is found in the cytoplasm. The catalysed reaction is apo-[ACP] + CoA = holo-[ACP] + adenosine 3',5'-bisphosphate + H(+). Functionally, transfers the 4'-phosphopantetheine moiety from coenzyme A to a Ser of acyl-carrier-protein. The protein is Holo-[acyl-carrier-protein] synthase of Paraburkholderia phytofirmans (strain DSM 17436 / LMG 22146 / PsJN) (Burkholderia phytofirmans).